A 716-amino-acid polypeptide reads, in one-letter code: Fatty acid oxidation complex subunit alpha (716 aa).

Positions 1-189 are enoyl-CoA hydratase/isomerase; it reads MIYQSPTIQV…KVGAVDAVVA (189 aa). A substrate-binding site is contributed by aspartate 296. Residues 311–716 form a 3-hydroxyacyl-CoA dehydrogenase region; that stretch reads KDVKSAAVLG…AANNGSYYQA (406 aa). NAD(+) contacts are provided by residues methionine 324, aspartate 343, 400 to 402, lysine 407, and serine 429; that span reads VVE. Catalysis depends on histidine 450, which acts as the For 3-hydroxyacyl-CoA dehydrogenase activity. Asparagine 453 is an NAD(+) binding site. Substrate-binding residues include asparagine 500 and tyrosine 660.

This sequence in the N-terminal section; belongs to the enoyl-CoA hydratase/isomerase family. In the C-terminal section; belongs to the 3-hydroxyacyl-CoA dehydrogenase family. Heterotetramer of two alpha chains (FadB) and two beta chains (FadA).

The catalysed reaction is a (3S)-3-hydroxyacyl-CoA + NAD(+) = a 3-oxoacyl-CoA + NADH + H(+). The enzyme catalyses a (3S)-3-hydroxyacyl-CoA = a (2E)-enoyl-CoA + H2O. It carries out the reaction a 4-saturated-(3S)-3-hydroxyacyl-CoA = a (3E)-enoyl-CoA + H2O. It catalyses the reaction (3S)-3-hydroxybutanoyl-CoA = (3R)-3-hydroxybutanoyl-CoA. The catalysed reaction is a (3Z)-enoyl-CoA = a 4-saturated (2E)-enoyl-CoA. The enzyme catalyses a (3E)-enoyl-CoA = a 4-saturated (2E)-enoyl-CoA. Its pathway is lipid metabolism; fatty acid beta-oxidation. Involved in the aerobic and anaerobic degradation of long-chain fatty acids via beta-oxidation cycle. Catalyzes the formation of 3-oxoacyl-CoA from enoyl-CoA via L-3-hydroxyacyl-CoA. It can also use D-3-hydroxyacyl-CoA and cis-3-enoyl-CoA as substrate. In Shewanella sp. (strain ANA-3), this protein is Fatty acid oxidation complex subunit alpha.